A 956-amino-acid polypeptide reads, in one-letter code: Zinc finger CCHC domain-containing protein 14 (956 aa).

8 disordered regions span residues 25-50, 78-99, 206-229, 243-276, 361-464, 485-505, 543-583, and 750-786; these read SSLNSGGGGGGGGGGGGKSAPGPSGA, ALHTSAHSTEESLPKRPLGKHG, SSSSPSQQLQSPSPGNPSLPKVGA, GIPSSQSSAQHHLQHSASTSASLPHCSHTGGTGS, KEKS…EKEK, PVQNETGSSPAAHHPLPPQLM, LEER…QGLS, and FYSGGAGSSSPGNIPASSQSHHHHHHHQQPPAPPQPA. Residues 29–43 are compositionally biased toward gly residues; it reads SGGGGGGGGGGGGKS. Composition is skewed to low complexity over residues 206-225 and 246-265; these read SSSSPSQQLQSPSPGNPSLP and SSQSSAQHHLQHSASTSASL. Over residues 369-389 the composition is skewed to polar residues; it reads LNSSAPSLVTSSGVARVTPTS. A compositionally biased stretch (low complexity) spans 423 to 432; sequence SSEYSSSSSS. The span at 438–464 shows a compositional bias: basic and acidic residues; the sequence is VREESSDSAEESDRRVDIHVEGTEKEK. Positions 750–768 are enriched in low complexity; the sequence is FYSGGAGSSSPGNIPASSQ. A CCHC-type zinc finger spans residues 913 to 930; that stretch reads LSCYNCGATGHRAQDCKQ.

The chain is Zinc finger CCHC domain-containing protein 14 (Zcchc14) from Mus musculus (Mouse).